The primary structure comprises 164 residues: CASP-like protein 1C1 (164 aa).

The Cytoplasmic segment spans residues 1–15; that stretch reads MGDVEIPPLVKQIVR. A helical membrane pass occupies residues 16–36; sequence GLRGLAFLATILATSFMAASH. At 37–56 the chain is on the extracellular side; sequence ERAIFPFDYKADYTDLMLFK. The chain crosses the membrane as a helical span at residues 57-77; that stretch reads AFLGANIAASLYSFFFVCLPP. The Cytoplasmic portion of the chain corresponds to 78 to 83; it reads KSLLWR. The chain crosses the membrane as a helical span at residues 84-104; it reads LAIVLDVIMFGLLVAMDSAAI. Residues 105–132 lie on the Extracellular side of the membrane; it reads AAAYLHKHGDSQAFWPPICSQVPTYCYR. The chain crosses the membrane as a helical span at residues 133-153; sequence VILAISIGFGGVFMFLLIIII. Residues 154-164 lie on the Cytoplasmic side of the membrane; that stretch reads SISVILNPLLV.

Belongs to the Casparian strip membrane proteins (CASP) family. In terms of assembly, homodimer and heterodimers.

It is found in the cell membrane. In Populus trichocarpa (Western balsam poplar), this protein is CASP-like protein 1C1.